The chain runs to 188 residues: MGLKSDTWIKKMSKKGMIEPFCEKQVGKNIVSYGLSSYGYDIRVGNEFMIFTNIGANLVDPKSFDERNVVEITTEENGYCLVPPNSFALARTIEYFRIPRNVLAICLGKSTYARCGIIVNVTPFEPEFEGHITIEISNTTPLPAKIYANEGIAQVLFLEGDETCEVSYKDKKGKYQGQKGITLPKVIK.

DCTP is bound at residue 109–114 (KSTYAR). The active-site Proton donor/acceptor is Glu-135. DCTP contacts are provided by Gln-154, Tyr-168, and Gln-178.

It belongs to the dCTP deaminase family. Homotrimer.

It carries out the reaction dCTP + H2O + H(+) = dUTP + NH4(+). The protein operates within pyrimidine metabolism; dUMP biosynthesis; dUMP from dCTP (dUTP route): step 1/2. In terms of biological role, catalyzes the deamination of dCTP to dUTP. This is dCTP deaminase from Helicobacter hepaticus (strain ATCC 51449 / 3B1).